The chain runs to 339 residues: UDP-N-acetylglucosamine/UDP-N-acetylgalactosamine transporter nstp-4 (339 aa).

8 helical membrane passes run 44 to 64 (LSST…FFVI), 94 to 114 (LKVA…FFAL), 148 to 168 (YNWM…YPSG), 186 to 206 (ILGL…GVYF), 224 to 244 (LAFF…WQAI), 255 to 275 (GVIW…ALVV), 281 to 301 (ILKG…SWLV), and 305 to 325 (LTIT…TFLY).

It belongs to the nucleotide-sugar transporter family. SLC35A subfamily. In terms of tissue distribution, widely expressed, including in pharynx and pharyngeal gland cells, seam cells, spermatheca, stomatointestinal muscle, vulva, and body wall muscle.

Its subcellular location is the golgi apparatus membrane. Uridine diphosphate-N-acetylglucosamine (UDP-GlcNAc) transporter in the Golgi apparatus. UDP-N-acetylgalactosamine (UDP-GalNAc) transporter in the Golgi apparatus. Apparently transports UDP-GlcNAc and UDP-GalNAc simultaneously, and independently, by an unknown mechanism. Functions redundantly with nucleotide sugar transporter srf-3. May be involved in gonadal development. The chain is UDP-N-acetylglucosamine/UDP-N-acetylgalactosamine transporter nstp-4 from Caenorhabditis elegans.